The following is a 112-amino-acid chain: uncharacterized protein (112 aa).

A helical transmembrane segment spans residues 85-105 (IVQLIILFAIIITNPNAIELI).

Belongs to the M.jannaschii MJ0023/MJ0349/MJ1072/MJ1074/MJ1107/MJECL16 family.

Its subcellular location is the membrane. This is an uncharacterized protein from Methanocaldococcus jannaschii (strain ATCC 43067 / DSM 2661 / JAL-1 / JCM 10045 / NBRC 100440) (Methanococcus jannaschii).